A 312-amino-acid chain; its full sequence is MKVAVLGAAGGIGQALALLLKTQLPSGSELSLYDIAPVTPGVAVDLSHIPTDVKIKGFSGEDATPALEGADVVLISAGVARKPGMDRSDLFNVNAGIVKNLVQQIAKTCPQACIGIITNPVNTTVAIAAEVLKKAGVYDKNKLFGVTTLDIIRSNTFVAELKGKSATEVEVPVIGGHSGVTILPLLSQIPGVSFSDQEIADLTKRIQNAGTEVVEAKAGGGSATLSMGQAAARFGLSLVRAMQGEKGVVECAYVEGDGHYARFFSQPLLLGKNGVEERQSIGKLSAFEQQALEGMLDTLKKDIALGEDFVNK.

NAD(+) contacts are provided by residues 7-13 and aspartate 34; that span reads GAAGGIG. Positions 81 and 87 each coordinate substrate. Residues asparagine 94 and 117-119 each bind NAD(+); that span reads ITN. Substrate is bound by residues asparagine 119 and arginine 153. Residue histidine 177 is the Proton acceptor of the active site. Methionine 227 contacts NAD(+).

Belongs to the LDH/MDH superfamily. MDH type 1 family. In terms of assembly, homodimer.

The catalysed reaction is (S)-malate + NAD(+) = oxaloacetate + NADH + H(+). Catalyzes the reversible oxidation of malate to oxaloacetate. This chain is Malate dehydrogenase (mdh), found in Klebsiella pneumoniae subsp. pneumoniae (strain ATCC 700721 / MGH 78578).